Reading from the N-terminus, the 1229-residue chain is Vacuolar protein sorting-associated protein 8 homolog (1229 aa).

Residues 67-89 are disordered; that stretch reads EFGMPVPHATPTPSIGEDSTIRT. The stretch at 901 to 1063 is one CHCR repeat; it reads ETTRLLSLHY…ILPHQELQSI (163 aa). The segment at 1148-1189 adopts an RING-type; atypical zinc-finger fold; the sequence is CSMCRQRLYDHSQVLIFGGCGHGIHEQCMEESETQFEECPRC.

Belongs to the VPS8 family. In terms of assembly, component of the class C core vacuole/endosome tethering (CORVET) complex composed of at least Vps8, dor/Vps18, car/Vps33A and Vps16A; unlike in other species, Vps11 is not part of the Drosophila complex. Due to the reduced number of components the Drosophila CORVET complex is often referred to as the miniCORVET complex. Has a higher affinity than the homotypic fusion and vacuole protein sorting (HOPS) tethering complex-specific component lt/Vps41 for Vps16A, car/Vps33A and dor/Vps18, the core components shared by both tethering complexes.

The protein resides in the early endosome. Functionally, part of the class C core vacuole/endosome tethering (CORVET) complex involved in endo-lysosomal vesicle trafficking and lysosome biogenesis by facilitating docking and fusion of endosomal vesicles. The CORVET complex acts upstream of the homotypic fusion and vacuole protein sorting (HOPS) tethering complex but is not involved in autophagic flux. The CORVET complex may cooperate with the early endosomal tether Rbsn-5 to mediate endosomal fusion. As part of the CORVET complex recruited to endosomes by activated GTP-bound Rab5. Specifically required for endocytic trafficking in a subset of cells, such as hemocytes and nephrocytes, which are highly active in endocytosis. The polypeptide is Vacuolar protein sorting-associated protein 8 homolog (Drosophila melanogaster (Fruit fly)).